The chain runs to 276 residues: Protein FAM151B (276 aa).

This sequence belongs to the menorin family.

Its function is as follows. Essential for survival of retinal photoreceptor cells. This Homo sapiens (Human) protein is Protein FAM151B (FAM151B).